Consider the following 210-residue polypeptide: Thymidylate kinase (210 aa).

Gly-10–Ser-17 provides a ligand contact to ATP.

The protein belongs to the thymidylate kinase family.

The enzyme catalyses dTMP + ATP = dTDP + ADP. Phosphorylation of dTMP to form dTDP in both de novo and salvage pathways of dTTP synthesis. The chain is Thymidylate kinase from Pseudomonas fluorescens (strain ATCC BAA-477 / NRRL B-23932 / Pf-5).